Here is a 361-residue protein sequence, read N- to C-terminus: Phospho-N-acetylmuramoyl-pentapeptide-transferase (361 aa).

Helical transmembrane passes span 25-45 (RAVMAALTALTISLLLGPWVI), 73-93 (TMGGSLILLAITLTTLLWADL), 97-117 (YVWLLLAVMLGTGALGFYDDW), 132-152 (FKMAWQSAIAIGAGVFLIATA), 167-187 (TVAYPLGAVGFCVLTYFVIVG), 200-220 (GLAALPTVLVSAGLAIFAYVA), 240-260 (VVVFCAAMCGACLGFLWFNAY), 264-284 (VFMGDVGALALGAALGTVAVI), 289-309 (IVLFLMGGLFVMEALSVMIQV), and 338-358 (QVVVRFWIVTMMLVLIGLSTL).

It belongs to the glycosyltransferase 4 family. MraY subfamily. Mg(2+) serves as cofactor.

Its subcellular location is the cell inner membrane. The catalysed reaction is UDP-N-acetyl-alpha-D-muramoyl-L-alanyl-gamma-D-glutamyl-meso-2,6-diaminopimeloyl-D-alanyl-D-alanine + di-trans,octa-cis-undecaprenyl phosphate = di-trans,octa-cis-undecaprenyl diphospho-N-acetyl-alpha-D-muramoyl-L-alanyl-D-glutamyl-meso-2,6-diaminopimeloyl-D-alanyl-D-alanine + UMP. It participates in cell wall biogenesis; peptidoglycan biosynthesis. In terms of biological role, catalyzes the initial step of the lipid cycle reactions in the biosynthesis of the cell wall peptidoglycan: transfers peptidoglycan precursor phospho-MurNAc-pentapeptide from UDP-MurNAc-pentapeptide onto the lipid carrier undecaprenyl phosphate, yielding undecaprenyl-pyrophosphoryl-MurNAc-pentapeptide, known as lipid I. The sequence is that of Phospho-N-acetylmuramoyl-pentapeptide-transferase from Chromobacterium violaceum (strain ATCC 12472 / DSM 30191 / JCM 1249 / CCUG 213 / NBRC 12614 / NCIMB 9131 / NCTC 9757 / MK).